Consider the following 307-residue polypeptide: Glutaminase (307 aa).

Substrate contacts are provided by Ser-67, Asn-117, Glu-161, Asn-168, Tyr-192, Tyr-243, and Val-261.

It belongs to the glutaminase family. In terms of assembly, homotetramer.

The catalysed reaction is L-glutamine + H2O = L-glutamate + NH4(+). The protein is Glutaminase of Streptomyces coelicolor (strain ATCC BAA-471 / A3(2) / M145).